A 102-amino-acid polypeptide reads, in one-letter code: Small ribosomal subunit protein uS10 (102 aa).

This sequence belongs to the universal ribosomal protein uS10 family. In terms of assembly, part of the 30S ribosomal subunit.

In terms of biological role, involved in the binding of tRNA to the ribosomes. This is Small ribosomal subunit protein uS10 from Gluconacetobacter diazotrophicus (strain ATCC 49037 / DSM 5601 / CCUG 37298 / CIP 103539 / LMG 7603 / PAl5).